We begin with the raw amino-acid sequence, 327 residues long: Embigin (327 aa).

Positions 1 to 32 (MRALPGLLEARARTPRLLLLQCLLAAARPSSA) are cleaved as a signal peptide. Residues 33-260 (DGSAPDSPFT…ELVVLSYLVP (228 aa)) are Extracellular-facing. 9 N-linked (GlcNAc...) asparagine glycosylation sites follow: Asn-54, Asn-61, Asn-75, Asn-85, Asn-100, Asn-189, Asn-196, Asn-213, and Asn-218. 2 consecutive Ig-like V-type domains span residues 71–158 (PVEK…NFKV) and 159–253 (PELH…IELV). Disulfide bonds link Cys-88–Cys-142 and Cys-180–Cys-237. The helical transmembrane segment at 261–281 (LKPFLVIVAEVILLVATILLC) threads the bilayer. Topologically, residues 282–327 (EKYTQKKKKHSDEGKEFEQIEQLKSDDSNGIENNVPRHRKNESLGQ) are cytoplasmic. The segment at 287 to 327 (KKKKHSDEGKEFEQIEQLKSDDSNGIENNVPRHRKNESLGQ) is disordered. Basic and acidic residues predominate over residues 291-308 (HSDEGKEFEQIEQLKSDD). Ser-309 is subject to Phosphoserine.

In terms of assembly, interacts with SLC16A1, SLC16A6 and SLC16A7.

It is found in the cell membrane. The protein resides in the synapse. Its function is as follows. Plays a role in the outgrowth of motoneurons and in the formation of neuromuscular junctions. Following muscle denervation, promotes nerve terminal sprouting and the formation of additional acetylcholine receptor clusters at synaptic sites without affecting terminal Schwann cell number or morphology. Delays the retraction of terminal sprouts following re-innervation of denervated endplates. May play a role in targeting the monocarboxylate transporters SLC16A1, SLC16A6 and SLC16A7 to the cell membrane. In Homo sapiens (Human), this protein is Embigin (EMB).